The chain runs to 454 residues: tRNA modification GTPase MnmE (454 aa).

Residues R23, E80, and K120 each coordinate (6S)-5-formyl-5,6,7,8-tetrahydrofolate. The TrmE-type G domain occupies 216 to 377; the sequence is GMKVVIAGRP…LRDHLKQSMG (162 aa). N226 contributes to the K(+) binding site. GTP contacts are provided by residues 226-231, 245-251, 270-273, 335-338, and 358-360; these read NAGKSS, TDIAGTT, DTAG, NKAD, and SAR. Mg(2+) is bound at residue S230. Residues T245, I247, and T250 each contribute to the K(+) site. A Mg(2+)-binding site is contributed by T251. (6S)-5-formyl-5,6,7,8-tetrahydrofolate is bound at residue K454.

This sequence belongs to the TRAFAC class TrmE-Era-EngA-EngB-Septin-like GTPase superfamily. TrmE GTPase family. In terms of assembly, homodimer. Heterotetramer of two MnmE and two MnmG subunits. K(+) serves as cofactor.

The protein localises to the cytoplasm. Its function is as follows. Exhibits a very high intrinsic GTPase hydrolysis rate. Involved in the addition of a carboxymethylaminomethyl (cmnm) group at the wobble position (U34) of certain tRNAs, forming tRNA-cmnm(5)s(2)U34. The protein is tRNA modification GTPase MnmE of Yersinia pseudotuberculosis serotype O:3 (strain YPIII).